We begin with the raw amino-acid sequence, 426 residues long: Nucleolar protein 12 (426 aa).

The tract at residues 26–128 (QSSGPVDTLE…SKRASRPDMK (103 aa)) is disordered. Residues 87–105 (LEEKYMQQVLKEDSDHESE) are compositionally biased toward basic and acidic residues. 2 RRM domains span residues 137–251 (RTVF…SVAH) and 259–339 (RSVF…RCRN). The segment covering 401–415 (KARSKTGRVTKRSQA) has biased composition (basic residues). Residues 401–426 (KARSKTGRVTKRSQAFKKAEANKKQK) are disordered. The segment covering 417-426 (KKAEANKKQK) has biased composition (basic and acidic residues).

The protein belongs to the RRM RBM34 family.

It is found in the nucleus. It localises to the nucleolus. Functionally, involved in pre-25S rRNA processing. This is Nucleolar protein 12 (NOP12) from Eremothecium gossypii (strain ATCC 10895 / CBS 109.51 / FGSC 9923 / NRRL Y-1056) (Yeast).